We begin with the raw amino-acid sequence, 1080 residues long: uncharacterized protein (1080 aa).

A signal peptide spans 1–17 (MHKLLVIIAHIIVCAYA). The Extracellular segment spans residues 18–1042 (DFTGFDNEAG…KSLDLEMIGK (1025 aa)). N-linked (GlcNAc...) asparagine; by host glycans are attached at residues Asn-439, Asn-664, and Asn-875. The helical transmembrane segment at 1043–1063 (IILLIAFVIVFVILLTIGIIT) threads the bilayer. Residues 1064–1080 (LVKRHRETLPEDEYLLP) lie on the Cytoplasmic side of the membrane.

It localises to the host membrane. This is an uncharacterized protein from Ostreid herpesvirus 1 (isolate France) (OsHV-1).